Here is a 239-residue protein sequence, read N- to C-terminus: ATP synthase subunit a, chloroplastic (239 aa).

The next 5 membrane-spanning stretches (helical) occupy residues 30 to 50, 87 to 107, 126 to 146, 191 to 211, and 212 to 232; these read VLLV…LGTF, VPFI…GALV, INTT…AGLS, LVVA…VMVL, and GLFA…SYIG.

Belongs to the ATPase A chain family. In terms of assembly, F-type ATPases have 2 components, CF(1) - the catalytic core - and CF(0) - the membrane proton channel. CF(1) has five subunits: alpha(3), beta(3), gamma(1), delta(1), epsilon(1). CF(0) has four main subunits: a, b, b' and c.

It is found in the plastid. The protein localises to the chloroplast thylakoid membrane. Its function is as follows. Key component of the proton channel; it plays a direct role in the translocation of protons across the membrane. This chain is ATP synthase subunit a, chloroplastic, found in Cyanidium caldarium (Red alga).